Here is a 92-residue protein sequence, read N- to C-terminus: Small ribosomal subunit protein uS19 (92 aa).

Belongs to the universal ribosomal protein uS19 family.

Its function is as follows. Protein S19 forms a complex with S13 that binds strongly to the 16S ribosomal RNA. The polypeptide is Small ribosomal subunit protein uS19 (Prochlorococcus marinus (strain MIT 9215)).